The chain runs to 1173 residues: Protein GIGANTEA (1173 aa).

3 disordered regions span residues 150–187 (EQQN…RKPL), 604–641 (SGSK…NVKG), and 840–863 (SRTE…SGRP). Polar residues-rich tracts occupy residues 162–172 (SKATTSGSPTS) and 613–633 (YAST…QTAN). The span at 854–863 (RHSDEGSGRP) shows a compositional bias: basic and acidic residues.

Belongs to the GIGANTEA family. Interacts with SPY. Interacts with ADO1 (via N-terminus) and ADO2. Interacts with ADO3 (via N-terminus). Interacts (via N-terminus) with CDF1. Interacts (via N-terminus) with TCP4. As to expression, widely expressed with highest levels in inflorescence apices, young flowers and young siliques.

Its subcellular location is the nucleus. The protein localises to the cytoplasm. Its function is as follows. Involved in regulation of circadian rhythm and photoperiodic flowering. May play a role in maintenance of circadian amplitude and period length. Is involved in phytochrome B signaling. Stabilizes ADO3 and the circadian photoreceptor ADO1/ZTL. Regulates 'CONSTANS' (CO) in the long-day flowering pathway by modulating the ADO3-dependent protein stability of CDF1 and CDF2, but is not essential to activate CO transcription. Regulates, via the microRNA miR172, a CO-independent pathway that promotes photoperiodic flowering by inducing 'FLOWERING LOCUS T'. In Arabidopsis thaliana (Mouse-ear cress), this protein is Protein GIGANTEA (GI).